The following is a 311-amino-acid chain: 4-hydroxyproline 2-epimerase (311 aa).

The Proton acceptor role is filled by Cys-89. Substrate contacts are provided by residues 90–91 (GH), His-209, and Asp-233. Residue Cys-237 is the Proton donor of the active site. Residue 238–239 (GT) participates in substrate binding.

Belongs to the proline racemase family.

It carries out the reaction trans-4-hydroxy-L-proline = cis-4-hydroxy-D-proline. Catalyzes the epimerization of trans-4-hydroxy-L-proline (t4LHyp) to cis-4-hydroxy-D-proline (c4DHyp). Is likely involved in a degradation pathway that converts t4LHyp to alpha-ketoglutarate. Displays no proline racemase activity. In Burkholderia ambifaria (strain ATCC BAA-244 / DSM 16087 / CCUG 44356 / LMG 19182 / AMMD) (Burkholderia cepacia (strain AMMD)), this protein is 4-hydroxyproline 2-epimerase.